Consider the following 763-residue polypeptide: Phosphoglycerol transferase I (763 aa).

4 consecutive transmembrane segments (helical) span residues 1-21 (MSEL…AWKA), 26-46 (WWFA…ITLF), 77-97 (ILPG…LGWI), and 108-128 (FGYS…SPAF).

Belongs to the OpgB family.

The protein localises to the cell inner membrane. The enzyme catalyses a phosphatidylglycerol + a membrane-derived-oligosaccharide D-glucose = a 1,2-diacyl-sn-glycerol + a membrane-derived-oligosaccharide 6-(glycerophospho)-D-glucose.. It functions in the pathway glycan metabolism; osmoregulated periplasmic glucan (OPG) biosynthesis. In terms of biological role, transfers a phosphoglycerol residue from phosphatidylglycerol to the membrane-bound nascent glucan backbones. This Escherichia coli (strain ATCC 8739 / DSM 1576 / NBRC 3972 / NCIMB 8545 / WDCM 00012 / Crooks) protein is Phosphoglycerol transferase I.